Consider the following 349-residue polypeptide: Protein POOR HOMOLOGOUS SYNAPSIS 1 (349 aa).

It is found in the cytoplasm. Required for accurate chromosome segregation in meiosis. Required for pairing to occur between homologous chromosomes. Acts in early recombination steps and ensures pairing fidelity and proper repair of meiotic DNA double-strand-breaks. Regulates recombination and pairing of homologous chromosomes during meiotic prophase by controlling transport of RAD50 from cytoplasm to the nucleus. May affect pairing of the gene-rich fraction of the genome rather than preventing pairing between repetitive DNA elements. This Arabidopsis thaliana (Mouse-ear cress) protein is Protein POOR HOMOLOGOUS SYNAPSIS 1.